Consider the following 105-residue polypeptide: Insulin (105 aa).

Residues 1 to 24 (MALWTRLVPLLALLALWAPAPAHA) form the signal peptide. Intrachain disulfides connect Cys31–Cys91, Cys43–Cys104, and Cys90–Cys95. Positions 57-82 (EVEGPQVGALELAGGPGAGGLEGPPQ) are cleaved as a propeptide — c peptide.

It belongs to the insulin family. Heterodimer of a B chain and an A chain linked by two disulfide bonds.

The protein resides in the secreted. Functionally, insulin decreases blood glucose concentration. It increases cell permeability to monosaccharides, amino acids and fatty acids. It accelerates glycolysis, the pentose phosphate cycle, and glycogen synthesis in liver. This Ovis aries (Sheep) protein is Insulin (INS).